The sequence spans 200 residues: ATP-dependent Clp protease proteolytic subunit (200 aa).

Ser-97 serves as the catalytic Nucleophile. The active site involves His-122.

The protein belongs to the peptidase S14 family. Fourteen ClpP subunits assemble into 2 heptameric rings which stack back to back to give a disk-like structure with a central cavity, resembling the structure of eukaryotic proteasomes.

The protein resides in the cytoplasm. The enzyme catalyses Hydrolysis of proteins to small peptides in the presence of ATP and magnesium. alpha-casein is the usual test substrate. In the absence of ATP, only oligopeptides shorter than five residues are hydrolyzed (such as succinyl-Leu-Tyr-|-NHMec, and Leu-Tyr-Leu-|-Tyr-Trp, in which cleavage of the -Tyr-|-Leu- and -Tyr-|-Trp bonds also occurs).. Functionally, cleaves peptides in various proteins in a process that requires ATP hydrolysis. Has a chymotrypsin-like activity. Plays a major role in the degradation of misfolded proteins. In Oleidesulfovibrio alaskensis (strain ATCC BAA-1058 / DSM 17464 / G20) (Desulfovibrio alaskensis), this protein is ATP-dependent Clp protease proteolytic subunit.